A 644-amino-acid chain; its full sequence is Low affinity sulfate transporter 3 (644 aa).

Over residues 1–19 (MSSLGTEQFSERSQWVLNS) the composition is skewed to polar residues. The segment at 1-20 (MSSLGTEQFSERSQWVLNSP) is disordered. Helical transmembrane passes span 50–70 (AVSF…YSAT), 76–96 (LLSG…YANL), 99–119 (LDPQ…ALMG), 124–144 (IAIG…PKVI), 156–176 (LVFT…VLRL), 179–199 (LVDF…AIVI), 242–262 (PLNF…RFIG), 268–288 (FFWL…LIVF), 328–348 (IGLI…RSFA), 394–414 (CKTA…LELF), 418–438 (LYYT…PGLI), 455–475 (LACL…GLLI), and 518–538 (PGIL…AGFV). The STAS domain maps to 511-635 (YPMAVTTPGI…LTVAEAVDAC (125 aa)).

This sequence belongs to the SLC26A/SulP transporter (TC 2.A.53) family.

Its subcellular location is the membrane. In terms of biological role, low-affinity H(+)/sulfate cotransporter which may be involved in the internal transport of sulfate between cellular or subcellular compartments within the plant. In Stylosanthes hamata (Caribbean stylo), this protein is Low affinity sulfate transporter 3 (ST3).